The chain runs to 962 residues: Leucine-rich repeat-containing G-protein coupled receptor 6 (962 aa).

Positions 1-16 are cleaved as a signal peptide; it reads MLVVLLILHAVSCAHS. One can recognise an LRRNT domain in the interval 20 to 60; the sequence is PGAAVPVKQCPSACQCEEDGILLLVDCSEQGLSSVPTDLSP. LRR repeat units lie at residues 38–58, 59–82, 83–106, 107–131, 133–154, 155–178, 179–202, 203–226, 228–250, 251–273, 275–297, 298–321, 322–344, 345–368, 370–390, 391–414, and 416–438; these read DGIL…PTDL, SPLT…AFRN, LHFL…MLQG, LYNL…PWEL, NLLS…TLSG, MRSL…ALND, LSSL…AFRN, LSNL…CFEG, HSLE…IRTL, AKLQ…AFVG, PLLQ…AFQF, LPKL…LKGT, TSLQ…LCHL, LPKL…YHCT, LQEI…TFQQ, LGSL…AFFS, and QSLI…GLTS. Asparagine 71 carries N-linked (GlcNAc...) asparagine glycosylation. Asparagine 202 carries an N-linked (GlcNAc...) asparagine glycan. 7 helical membrane-spanning segments follow: residues 559 to 579, 590 to 610, 647 to 669, 679 to 699, 723 to 743, 766 to 786, and 801 to 821; these read GMWL…LTVF, FIIG…GTLA, SILF…RAYG, AAAV…LIGV, FMVA…GTYI, VAWL…LTFS, and SVVL…YLLF. An intrachain disulfide couples cysteine 633 to cysteine 708.

This sequence belongs to the G-protein coupled receptor 1 family.

The protein localises to the cell membrane. Receptor for R-spondins that potentiates the canonical Wnt signaling pathway. Upon binding to R-spondins (rspo1, rspo2, rspo3 or rspo4), associates with phosphorylated lrp6 and frizzled receptors that are activated by extracellular Wnt receptors, triggering the canonical Wnt signaling pathway to increase expression of target genes. In contrast to classical G-protein coupled receptors, does not activate heterotrimeric G-proteins to transduce the signal. This chain is Leucine-rich repeat-containing G-protein coupled receptor 6 (lgr6), found in Danio rerio (Zebrafish).